A 515-amino-acid polypeptide reads, in one-letter code: 2,3-bisphosphoglycerate-independent phosphoglycerate mutase (515 aa).

Mn(2+) contacts are provided by Asp14 and Ser64. The active-site Phosphoserine intermediate is the Ser64. Residues His125, 155–156 (RD), Arg187, Arg193, 263–266 (RADR), and Lys337 each bind substrate. Residues Asp404, His408, Asp445, His446, and His464 each coordinate Mn(2+).

This sequence belongs to the BPG-independent phosphoglycerate mutase family. As to quaternary structure, monomer. It depends on Mn(2+) as a cofactor.

The enzyme catalyses (2R)-2-phosphoglycerate = (2R)-3-phosphoglycerate. The protein operates within carbohydrate degradation; glycolysis; pyruvate from D-glyceraldehyde 3-phosphate: step 3/5. Functionally, catalyzes the interconversion of 2-phosphoglycerate and 3-phosphoglycerate. The chain is 2,3-bisphosphoglycerate-independent phosphoglycerate mutase from Cronobacter sakazakii (strain ATCC BAA-894) (Enterobacter sakazakii).